A 104-amino-acid chain; its full sequence is MKVHVRKNDTVVVISGKDKGKTGEVLRVIPKTGKVVVKGVNLVKKHQKPNRQNMQGGIIEMEAAINSSKVMLFCEKCKKATRISHKLLEDGAKVRVCKKCGETF.

It belongs to the universal ribosomal protein uL24 family. Part of the 50S ribosomal subunit.

Functionally, one of two assembly initiator proteins, it binds directly to the 5'-end of the 23S rRNA, where it nucleates assembly of the 50S subunit. Its function is as follows. One of the proteins that surrounds the polypeptide exit tunnel on the outside of the subunit. This chain is Large ribosomal subunit protein uL24, found in Clostridium perfringens (strain ATCC 13124 / DSM 756 / JCM 1290 / NCIMB 6125 / NCTC 8237 / Type A).